The chain runs to 326 residues: Probable cell division protein WhiA (326 aa).

A DNA-binding region (H-T-H motif) is located at residues 275 to 308 (SLEELGQLAEPPMTKDAVAGRIRRLLAMADKRAR).

It belongs to the WhiA family.

Involved in cell division and chromosome segregation. The chain is Probable cell division protein WhiA from Saccharopolyspora erythraea (strain ATCC 11635 / DSM 40517 / JCM 4748 / NBRC 13426 / NCIMB 8594 / NRRL 2338).